A 260-amino-acid polypeptide reads, in one-letter code: Acetylglutamate kinase (260 aa).

Substrate is bound by residues 46–47 (GG), Arg-68, and Asn-160.

It belongs to the acetylglutamate kinase family. ArgB subfamily.

The protein resides in the cytoplasm. It catalyses the reaction N-acetyl-L-glutamate + ATP = N-acetyl-L-glutamyl 5-phosphate + ADP. The protein operates within amino-acid biosynthesis; L-arginine biosynthesis; N(2)-acetyl-L-ornithine from L-glutamate: step 2/4. Catalyzes the ATP-dependent phosphorylation of N-acetyl-L-glutamate. This is Acetylglutamate kinase from Shewanella oneidensis (strain ATCC 700550 / JCM 31522 / CIP 106686 / LMG 19005 / NCIMB 14063 / MR-1).